Consider the following 160-residue polypeptide: uncharacterized protein (160 aa).

It localises to the mitochondrion. This is an uncharacterized protein from Arabidopsis thaliana (Mouse-ear cress).